We begin with the raw amino-acid sequence, 389 residues long: Cobalt-precorrin-5B C(1)-methyltransferase (389 aa).

Positions 1 to 25 (MESRADHAVPADEGHGATEPPRGRD) are disordered.

Belongs to the CbiD family.

It carries out the reaction Co-precorrin-5B + S-adenosyl-L-methionine = Co-precorrin-6A + S-adenosyl-L-homocysteine. It functions in the pathway cofactor biosynthesis; adenosylcobalamin biosynthesis; cob(II)yrinate a,c-diamide from sirohydrochlorin (anaerobic route): step 6/10. In terms of biological role, catalyzes the methylation of C-1 in cobalt-precorrin-5B to form cobalt-precorrin-6A. The chain is Cobalt-precorrin-5B C(1)-methyltransferase from Nitratidesulfovibrio vulgaris (strain ATCC 29579 / DSM 644 / CCUG 34227 / NCIMB 8303 / VKM B-1760 / Hildenborough) (Desulfovibrio vulgaris).